The primary structure comprises 457 residues: Chromosomal replication initiator protein DnaA (457 aa).

The domain I, interacts with DnaA modulators stretch occupies residues 1–81; the sequence is MERDLSQLWQ…NNTDLVIKVQ (81 aa). The interval 81–119 is domain II; that stretch reads QEGSKPAARKVVAQQEIANTPVQHSAPMPENEPQAAFRS. The segment at 120 to 337 is domain III, AAA+ region; the sequence is NLNQHHLFEN…GALNRVHANA (218 aa). The ATP site is built by G165, G167, K168, and T169. A domain IV, binds dsDNA region spans residues 338-457; the sequence is DFTGKAITID…WSNLIRTLSA (120 aa).

It belongs to the DnaA family. As to quaternary structure, oligomerizes as a right-handed, spiral filament on DNA at oriC.

Its subcellular location is the cytoplasm. Plays an essential role in the initiation and regulation of chromosomal replication. ATP-DnaA binds to the origin of replication (oriC) to initiate formation of the DNA replication initiation complex once per cell cycle. Binds the DnaA box (a 9 base pair repeat at the origin) and separates the double-stranded (ds)DNA. Forms a right-handed helical filament on oriC DNA; dsDNA binds to the exterior of the filament while single-stranded (ss)DNA is stabiized in the filament's interior. The ATP-DnaA-oriC complex binds and stabilizes one strand of the AT-rich DNA unwinding element (DUE), permitting loading of DNA polymerase. After initiation quickly degrades to an ADP-DnaA complex that is not apt for DNA replication. Binds acidic phospholipids. This chain is Chromosomal replication initiator protein DnaA, found in Mannheimia succiniciproducens (strain KCTC 0769BP / MBEL55E).